The chain runs to 189 residues: Protein seele (189 aa).

Residues 1-17 (MLTKALILFGLLALAQG) form the signal peptide. In terms of domain architecture, Saposin B-type spans 23-176 (REVKCHVCKA…EQASYCDESP (154 aa)). Cystine bridges form between Cys27–Cys172, Cys30–Cys165, and Cys85–Cys136. Positions 186–189 (KEEL) match the Prevents secretion from ER motif.

This sequence belongs to the canopy family.

It localises to the endoplasmic reticulum. Involved in embryonic dorsal-ventral patterning which is generated by a series of serine protease processing events where gd processes snk which cleaves ea which then processes spz into the activating ligand for the Toll receptor. Required during this process for the secretion of ea from the developing embryo into the perivitelline space and for ea processing. This chain is Protein seele, found in Drosophila melanogaster (Fruit fly).